A 510-amino-acid polypeptide reads, in one-letter code: Aspartate kinase FUB3 (510 aa).

ACT domains follow at residues 372 to 440 (ILSN…VLPD) and 446 to 510 (LVGA…KNAI).

This sequence belongs to the aspartokinase family.

It catalyses the reaction L-aspartate + ATP = 4-phospho-L-aspartate + ADP. It functions in the pathway mycotoxin biosynthesis. Aspartate kinase; part of the gene cluster that mediates the biosynthesis of fusaric acid, a mycotoxin with low to moderate toxicity to animals and humans, but with high phytotoxic properties. L-aspartate is suggested as fusaric acid amino acid precursor that is activated and further processed to O-acetyl-L-homoserine by cluster enzymes aspartate kinase FUB3 and homoserine O-acetyltransferase FUB5, as well as enzymes of the primary metabolism. The polyketide synthase (PKS) FUB1 generates the triketide trans-2-hexenal which is presumptively released by the hydrolase FUB4 and linked to the NRPS-bound amino acid precursor by NAD(P)-dependent dehydrogenase FUB6. FUB1, FUB4, and the non-canonical NRPS Fub8 may form an enzyme complex. Further processing of the NRPS-bound intermediate might be carried out by FUB6 and the sulfhydrylase FUB7, enabling a spontaneous electrocyclization to close the carbon backbone of fusaric acid. Dihydrofusaric acid is likely to be released via reduction by the thioester reductase (TR) domain of FUB8 whereupon the final oxidation to fusaric acid may (also) be performed by the FMN-dependent dehydrogenase FUB9. This is Aspartate kinase FUB3 from Gibberella fujikuroi (strain CBS 195.34 / IMI 58289 / NRRL A-6831) (Bakanae and foot rot disease fungus).